The sequence spans 555 residues: Glutamine--tRNA ligase (555 aa).

Positions 34-44 match the 'HIGH' region motif; the sequence is PEPNGYLHIGH. ATP is bound by residues 35–37 and 41–47; these read EPN and HIGHAKS. L-glutamine is bound by residues Asp67 and Tyr212. ATP is bound by residues Thr231, 261–262, and 269–271; these read RL and MSK. The short motif at 268 to 272 is the 'KMSKS' region element; it reads VMSKR.

Belongs to the class-I aminoacyl-tRNA synthetase family. As to quaternary structure, monomer.

It localises to the cytoplasm. It carries out the reaction tRNA(Gln) + L-glutamine + ATP = L-glutaminyl-tRNA(Gln) + AMP + diphosphate. In Proteus mirabilis (strain HI4320), this protein is Glutamine--tRNA ligase.